Here is a 509-residue protein sequence, read N- to C-terminus: MDIRAAEISAILKDQIKNFGREAEVSEVGQVLSVGDGIARVYGLDNVQAGEMVEFPGGIRGMALNLEADNVGVVIFGADRDIKEGDTVKRTGAIVDVPVGPGLLGRVVDALGNPIDGKGPIKATERKRVDVKAPGIIPRKSVHEPMSTGLKAIDALIPVGRGQRELVIGDRQTGKTAIILDTMLNQKSVHDNGPEKEKLYCVYVAVGQKRSTVAQFVKVLEERGALEYSIIVAATASDPAPMQFLAPFAGCTMGEYFRDNGMHALISYDDLSKQAVAYRQMSLLLRRPPGREAYPGDVFYLHSRLLERAAKLNDDLGNGSLTALPVIETQANDVSAYIPTNVISITDGQIFLETNLFFQGIRPAVNVGLSVSRVGSSAQIKAMKQVAGSIKGELAQYREMAAFAQFGSDLDAATQRLLNRGSRLTELLKQPQFSPLKTEEQVAVIFAGVNGYLDKLPVNQVGKFEHGLLSHMRAAGKDVLDAIRKEKALSDDLRAKLKAEIDAFAKTFA.

Residue 169–176 coordinates ATP; that stretch reads GDRQTGKT.

This sequence belongs to the ATPase alpha/beta chains family. F-type ATPases have 2 components, CF(1) - the catalytic core - and CF(0) - the membrane proton channel. CF(1) has five subunits: alpha(3), beta(3), gamma(1), delta(1), epsilon(1). CF(0) has three main subunits: a(1), b(2) and c(9-12). The alpha and beta chains form an alternating ring which encloses part of the gamma chain. CF(1) is attached to CF(0) by a central stalk formed by the gamma and epsilon chains, while a peripheral stalk is formed by the delta and b chains.

The protein resides in the cell inner membrane. It catalyses the reaction ATP + H2O + 4 H(+)(in) = ADP + phosphate + 5 H(+)(out). Its function is as follows. Produces ATP from ADP in the presence of a proton gradient across the membrane. The alpha chain is a regulatory subunit. The protein is ATP synthase subunit alpha of Mesorhizobium japonicum (strain LMG 29417 / CECT 9101 / MAFF 303099) (Mesorhizobium loti (strain MAFF 303099)).